The primary structure comprises 705 residues: Elongation factor G 2 (705 aa).

One can recognise a tr-type G domain in the interval glutamate 8 to leucine 290. GTP is bound by residues alanine 17–threonine 24, aspartate 88–histidine 92, and asparagine 142–aspartate 145.

This sequence belongs to the TRAFAC class translation factor GTPase superfamily. Classic translation factor GTPase family. EF-G/EF-2 subfamily.

The protein localises to the cytoplasm. Its function is as follows. Catalyzes the GTP-dependent ribosomal translocation step during translation elongation. During this step, the ribosome changes from the pre-translocational (PRE) to the post-translocational (POST) state as the newly formed A-site-bound peptidyl-tRNA and P-site-bound deacylated tRNA move to the P and E sites, respectively. Catalyzes the coordinated movement of the two tRNA molecules, the mRNA and conformational changes in the ribosome. This chain is Elongation factor G 2, found in Bordetella avium (strain 197N).